Consider the following 621-residue polypeptide: UvrABC system protein C (621 aa).

Positions T20–V98 constitute a GIY-YIG domain. Residues D207–M242 enclose the UVR domain.

Belongs to the UvrC family. As to quaternary structure, interacts with UvrB in an incision complex.

The protein localises to the cytoplasm. Functionally, the UvrABC repair system catalyzes the recognition and processing of DNA lesions. UvrC both incises the 5' and 3' sides of the lesion. The N-terminal half is responsible for the 3' incision and the C-terminal half is responsible for the 5' incision. This chain is UvrABC system protein C, found in Xylella fastidiosa (strain M23).